The primary structure comprises 174 residues: Large ribosomal subunit protein uL16 (174 aa).

It belongs to the universal ribosomal protein uL16 family.

The sequence is that of Large ribosomal subunit protein uL16 from Methanocaldococcus jannaschii (strain ATCC 43067 / DSM 2661 / JAL-1 / JCM 10045 / NBRC 100440) (Methanococcus jannaschii).